The sequence spans 491 residues: Ketol-acid reductoisomerase (NADP(+)) (491 aa).

A KARI N-terminal Rossmann domain is found at 15 to 208 (AQLGKCRFMA…GGHRAGVLES (194 aa)). NADP(+) is bound by residues 45–48 (CGAQ), arginine 68, arginine 76, serine 78, and 108–110 (DKQ). Residue histidine 132 is part of the active site. Glycine 158 contributes to the NADP(+) binding site. KARI C-terminal knotted domains lie at 209–344 (SFVA…TASQ) and 345–484 (FDGK…MKDM). Mg(2+) is bound by residues aspartate 217, glutamate 221, glutamate 389, and glutamate 393. Serine 414 is a substrate binding site.

It belongs to the ketol-acid reductoisomerase family. The cofactor is Mg(2+).

The catalysed reaction is (2R)-2,3-dihydroxy-3-methylbutanoate + NADP(+) = (2S)-2-acetolactate + NADPH + H(+). The enzyme catalyses (2R,3R)-2,3-dihydroxy-3-methylpentanoate + NADP(+) = (S)-2-ethyl-2-hydroxy-3-oxobutanoate + NADPH + H(+). Its pathway is amino-acid biosynthesis; L-isoleucine biosynthesis; L-isoleucine from 2-oxobutanoate: step 2/4. It functions in the pathway amino-acid biosynthesis; L-valine biosynthesis; L-valine from pyruvate: step 2/4. In terms of biological role, involved in the biosynthesis of branched-chain amino acids (BCAA). Catalyzes an alkyl-migration followed by a ketol-acid reduction of (S)-2-acetolactate (S2AL) to yield (R)-2,3-dihydroxy-isovalerate. In the isomerase reaction, S2AL is rearranged via a Mg-dependent methyl migration to produce 3-hydroxy-3-methyl-2-ketobutyrate (HMKB). In the reductase reaction, this 2-ketoacid undergoes a metal-dependent reduction by NADPH to yield (R)-2,3-dihydroxy-isovalerate. The chain is Ketol-acid reductoisomerase (NADP(+)) from Enterobacter sp. (strain 638).